The following is a 448-amino-acid chain: Probable glycine dehydrogenase (decarboxylating) subunit 1 (448 aa).

It belongs to the GcvP family. N-terminal subunit subfamily. In terms of assembly, the glycine cleavage system is composed of four proteins: P, T, L and H. In this organism, the P 'protein' is a heterodimer of two subunits.

The enzyme catalyses N(6)-[(R)-lipoyl]-L-lysyl-[glycine-cleavage complex H protein] + glycine + H(+) = N(6)-[(R)-S(8)-aminomethyldihydrolipoyl]-L-lysyl-[glycine-cleavage complex H protein] + CO2. In terms of biological role, the glycine cleavage system catalyzes the degradation of glycine. The P protein binds the alpha-amino group of glycine through its pyridoxal phosphate cofactor; CO(2) is released and the remaining methylamine moiety is then transferred to the lipoamide cofactor of the H protein. In Staphylococcus aureus (strain USA300), this protein is Probable glycine dehydrogenase (decarboxylating) subunit 1.